The following is a 631-amino-acid chain: Vacuolar-sorting receptor 6 (631 aa).

Positions 1–25 (MSLIHKGATLALFLALTMVVNGVFG) are cleaved as a signal peptide. Topologically, residues 26–563 (RFIVEKSSVT…CIERSGSRIG (538 aa)) are lumenal. The PA domain occupies 57–165 (NYGGYMIGSV…SFANTLKQAL (109 aa)). N-linked (GlcNAc...) asparagine glycosylation is found at asparagine 294 and asparagine 431. 2 consecutive EGF-like domains span residues 413-463 (ETNE…TSCE) and 494-540 (ETSG…FECK). 5 disulfide bridges follow: cysteine 417/cysteine 435, cysteine 424/cysteine 444, cysteine 446/cysteine 462, cysteine 498/cysteine 511, and cysteine 530/cysteine 539. A helical membrane pass occupies residues 564-584 (WFPTFVILAAVASICVGGYVF). The Cytoplasmic portion of the chain corresponds to 585–631 (YKYRLRSYMDSEIMAIMSQYMPLESQNTTDPMTGESQHQQLRLTSAA). Positions 604 to 607 (YMPL) match the Tyrosine-based internalization motif motif. Residues 610-631 (QNTTDPMTGESQHQQLRLTSAA) form a disordered region.

Belongs to the VSR (BP-80) family. As to expression, expressed in seedlings, roots, leaves, flowers and siliques.

It localises to the membrane. It is found in the golgi apparatus membrane. The protein localises to the cytoplasmic vesicle. The protein resides in the clathrin-coated vesicle membrane. Its subcellular location is the prevacuolar compartment membrane. Vacuolar-sorting receptor (VSR) involved in clathrin-coated vesicles sorting from Golgi apparatus to vacuoles. In Arabidopsis thaliana (Mouse-ear cress), this protein is Vacuolar-sorting receptor 6 (VSR6).